A 490-amino-acid polypeptide reads, in one-letter code: Betaine aldehyde dehydrogenase (490 aa).

3 residues coordinate K(+): Thr-26, Ile-27, and Asp-93. 150 to 152 (GAW) is a binding site for NAD(+). Lys-162 serves as the catalytic Charge relay system. Position 176–179 (176–179 (KPSE)) interacts with NAD(+). Val-180 is a binding site for K(+). 230–233 (GVAS) serves as a coordination point for NAD(+). Residue Leu-246 coordinates K(+). Residue Glu-252 is the Proton acceptor of the active site. Residues Gly-254, Cys-286, and Glu-387 each contribute to the NAD(+) site. The active-site Nucleophile is Cys-286. The residue at position 286 (Cys-286) is a Cysteine sulfenic acid (-SOH). 2 residues coordinate K(+): Lys-457 and Gly-460. Catalysis depends on Glu-464, which acts as the Charge relay system.

It belongs to the aldehyde dehydrogenase family. As to quaternary structure, dimer of dimers. The cofactor is K(+).

It carries out the reaction betaine aldehyde + NAD(+) + H2O = glycine betaine + NADH + 2 H(+). Its pathway is amine and polyamine biosynthesis; betaine biosynthesis via choline pathway; betaine from betaine aldehyde: step 1/1. Its function is as follows. Involved in the biosynthesis of the osmoprotectant glycine betaine. Catalyzes the irreversible oxidation of betaine aldehyde to the corresponding acid. The protein is Betaine aldehyde dehydrogenase of Escherichia coli O139:H28 (strain E24377A / ETEC).